The following is a 427-amino-acid chain: Adenylosuccinate synthetase (427 aa).

Residues 11 to 17 (GDEGKGK) and 39 to 41 (GHT) contribute to the GTP site. Catalysis depends on Asp12, which acts as the Proton acceptor. Residues Asp12 and Gly39 each coordinate Mg(2+). IMP is bound by residues 12 to 15 (DEGK), 37 to 40 (NAGH), Thr132, Arg146, Gln223, Thr238, and Arg302. The Proton donor role is filled by His40. A substrate-binding site is contributed by 298 to 304 (TTTGRPR). GTP-binding positions include Arg304, 330–332 (KLD), and 412–414 (GVG).

This sequence belongs to the adenylosuccinate synthetase family. Homodimer. Mg(2+) serves as cofactor.

It is found in the cytoplasm. It carries out the reaction IMP + L-aspartate + GTP = N(6)-(1,2-dicarboxyethyl)-AMP + GDP + phosphate + 2 H(+). It functions in the pathway purine metabolism; AMP biosynthesis via de novo pathway; AMP from IMP: step 1/2. Its function is as follows. Plays an important role in the de novo pathway and in the salvage pathway of purine nucleotide biosynthesis. Catalyzes the first committed step in the biosynthesis of AMP from IMP. This is Adenylosuccinate synthetase (purA) from Dictyostelium discoideum (Social amoeba).